The primary structure comprises 245 residues: MPRYKLTIEYDGAPFFGWQVQDTLPSVQGALEAAVKAMTGADLRVHGAGRTDAGVHARGQVAHVDIEKQFPPGRFRDGLNAHLRPHPIAVLEAEIVPDTFEARFSAVKRHYRYRIVNTRANLALDIGHAWRVPRRLDSDAMHAAARRLLGKHDFTTFRDTECQAKSPEKTLDQLDVLRDGREITIITSARSFLHSQVRSMVGSLVWVGEGRWTADDLSAALAARNRAACGIVAPPDGLYLVKVDY.

The active-site Nucleophile is aspartate 52. Tyrosine 111 provides a ligand contact to substrate.

Belongs to the tRNA pseudouridine synthase TruA family. Homodimer.

The enzyme catalyses uridine(38/39/40) in tRNA = pseudouridine(38/39/40) in tRNA. Its function is as follows. Formation of pseudouridine at positions 38, 39 and 40 in the anticodon stem and loop of transfer RNAs. In Bradyrhizobium diazoefficiens (strain JCM 10833 / BCRC 13528 / IAM 13628 / NBRC 14792 / USDA 110), this protein is tRNA pseudouridine synthase A.